The primary structure comprises 375 residues: Queuine tRNA-ribosyltransferase (375 aa).

Asp-89 serves as the catalytic Proton acceptor. Substrate contacts are provided by residues 89–93 (DSGGF), Asp-143, Gln-187, and Gly-214. Residues 245–251 (GVGKPED) form an RNA binding region. Asp-264 (nucleophile) is an active-site residue. Residues 269–273 (TRNAR) are RNA binding; important for wobble base 34 recognition. Residues Cys-302, Cys-304, Cys-307, and His-333 each contribute to the Zn(2+) site.

It belongs to the queuine tRNA-ribosyltransferase family. In terms of assembly, homodimer. Within each dimer, one monomer is responsible for RNA recognition and catalysis, while the other monomer binds to the replacement base PreQ1. Zn(2+) is required as a cofactor.

The enzyme catalyses 7-aminomethyl-7-carbaguanine + guanosine(34) in tRNA = 7-aminomethyl-7-carbaguanosine(34) in tRNA + guanine. It participates in tRNA modification; tRNA-queuosine biosynthesis. In terms of biological role, catalyzes the base-exchange of a guanine (G) residue with the queuine precursor 7-aminomethyl-7-deazaguanine (PreQ1) at position 34 (anticodon wobble position) in tRNAs with GU(N) anticodons (tRNA-Asp, -Asn, -His and -Tyr). Catalysis occurs through a double-displacement mechanism. The nucleophile active site attacks the C1' of nucleotide 34 to detach the guanine base from the RNA, forming a covalent enzyme-RNA intermediate. The proton acceptor active site deprotonates the incoming PreQ1, allowing a nucleophilic attack on the C1' of the ribose to form the product. After dissociation, two additional enzymatic reactions on the tRNA convert PreQ1 to queuine (Q), resulting in the hypermodified nucleoside queuosine (7-(((4,5-cis-dihydroxy-2-cyclopenten-1-yl)amino)methyl)-7-deazaguanosine). This Salmonella paratyphi A (strain ATCC 9150 / SARB42) protein is Queuine tRNA-ribosyltransferase.